Consider the following 571-residue polypeptide: Isocitrate dehydrogenase kinase/phosphatase (571 aa).

ATP is bound by residues 318–324 (APGVRGM) and K339. The active site involves D374.

The protein belongs to the AceK family.

The protein resides in the cytoplasm. It carries out the reaction L-seryl-[isocitrate dehydrogenase] + ATP = O-phospho-L-seryl-[isocitrate dehydrogenase] + ADP + H(+). Functionally, bifunctional enzyme which can phosphorylate or dephosphorylate isocitrate dehydrogenase (IDH) on a specific serine residue. This is a regulatory mechanism which enables bacteria to bypass the Krebs cycle via the glyoxylate shunt in response to the source of carbon. When bacteria are grown on glucose, IDH is fully active and unphosphorylated, but when grown on acetate or ethanol, the activity of IDH declines drastically concomitant with its phosphorylation. This chain is Isocitrate dehydrogenase kinase/phosphatase, found in Pseudomonas entomophila (strain L48).